Reading from the N-terminus, the 921-residue chain is Isoleucine--tRNA ligase (921 aa).

The short motif at 57 to 67 (PYANGDIHMGH) is the 'HIGH' region element. Glutamate 552 lines the L-isoleucyl-5'-AMP pocket. The 'KMSKS' region signature appears at 593 to 597 (KMSKS). Position 596 (lysine 596) interacts with ATP. Cysteine 887, cysteine 890, cysteine 907, and cysteine 910 together coordinate Zn(2+).

It belongs to the class-I aminoacyl-tRNA synthetase family. IleS type 1 subfamily. Monomer. Zn(2+) serves as cofactor.

It localises to the cytoplasm. It carries out the reaction tRNA(Ile) + L-isoleucine + ATP = L-isoleucyl-tRNA(Ile) + AMP + diphosphate. Its function is as follows. Catalyzes the attachment of isoleucine to tRNA(Ile). As IleRS can inadvertently accommodate and process structurally similar amino acids such as valine, to avoid such errors it has two additional distinct tRNA(Ile)-dependent editing activities. One activity is designated as 'pretransfer' editing and involves the hydrolysis of activated Val-AMP. The other activity is designated 'posttransfer' editing and involves deacylation of mischarged Val-tRNA(Ile). This is Isoleucine--tRNA ligase from Halalkalibacterium halodurans (strain ATCC BAA-125 / DSM 18197 / FERM 7344 / JCM 9153 / C-125) (Bacillus halodurans).